The sequence spans 33 residues: Brevinin 2AV (33 aa).

C27 and C33 form a disulfide bridge.

In terms of tissue distribution, expressed by the skin glands.

The protein resides in the secreted. Has antibacterial activity. This chain is Brevinin 2AV, found in Rana arvalis (Moor frog).